The sequence spans 387 residues: Alkanesulfonate monooxygenase (387 aa).

It belongs to the SsuD family.

It carries out the reaction an alkanesulfonate + FMNH2 + O2 = an aldehyde + FMN + sulfite + H2O + 2 H(+). In terms of biological role, catalyzes the desulfonation of aliphatic sulfonates. This is Alkanesulfonate monooxygenase from Ralstonia pickettii (strain 12J).